A 560-amino-acid polypeptide reads, in one-letter code: MSNKVKSDIEIASKAEILPVTTIAEHLGLDADALELYGKYKAKLSYDTIHSLKDKETGKLVLVTAINPTPAGEGKSTVTVGLGDALSKKDKKTVIALREPSLGPTMGIKGGATGGGYAQVIPMEDINLHFTGDFHAITAANNALSAFIDNHMQQGNDLDIDGRRIVWKRVVDLNDRALRKVVVGLGGPIQGVPREDGFDITVASEIMAIICLASDLKDLKKRLSEIVIGYNYKKEPITVGEMGYEGALTLLLKDALKPNLVQTLEHTPAIVHGGPFANIAHGCNSVSATSTALRLGEYVVTEAGFGADLGAEKFLDIKVPALGKAPDCVVIVATIRALKMHGGALKTELSEENVDALAKGFTNLQKHTESIQTFGIPYVVAINKFITDSDAEVAKLEALCEEHGIPFSLTEVWEKGGDGGLELADKVIAAVESGEADYKRIYDDAWSIEEKLEAIVTKVYGGIGVELSSKAQKQIVEFKKYGWDRYPICMAKTQYSLSDDPTLLGRPTDFVIHIREFIPKLGAGFVVALTGDVMTMPGLPKKPAALNMDVDENGNAQGLF.

69–76 (TPAGEGKS) is an ATP binding site.

Belongs to the formate--tetrahydrofolate ligase family.

It carries out the reaction (6S)-5,6,7,8-tetrahydrofolate + formate + ATP = (6R)-10-formyltetrahydrofolate + ADP + phosphate. It participates in one-carbon metabolism; tetrahydrofolate interconversion. This chain is Formate--tetrahydrofolate ligase, found in Listeria monocytogenes serotype 4a (strain HCC23).